Consider the following 97-residue polypeptide: U-reduvitoxin-Pr11a (97 aa).

An N-terminal signal peptide occupies residues 1–20 (MKTALFLVFALAFIAVEGKM). 2 consecutive Pacifastin domains span residues 22–59 (RACS…CPPR) and 62–97 (EKSC…KLCL). Disulfide bonds link cysteine 24/cysteine 42, cysteine 37/cysteine 56, and cysteine 40/cysteine 51. The segment at 57 to 59 (PPR) is pro-Pro-Arg motif necessary for proteolytic processing. Cystine bridges form between cysteine 65–cysteine 82, cysteine 77–cysteine 96, and cysteine 80–cysteine 91.

This sequence belongs to the protease inhibitor I19 family. As to expression, expressed by the venom gland.

The protein localises to the secreted. Inhibits trypsin activity and prophenoloxidase (PPO) activation, an enzyme essential for both clotting and insect innate immune responses. It does not inhibit activity of chymotrypsin and protease K, and has no effect on phenoloxidase (PO) activity. This chain is U-reduvitoxin-Pr11a, found in Platymeris rhadamanthus (Red spot assassin bug).